Reading from the N-terminus, the 283-residue chain is Protein boule-like (283 aa).

The tract at residues 1–25 is disordered; that stretch reads MQTDSLSPSPNPVSPVPLNNPTSAP. One can recognise an RRM domain in the interval 33–110; the sequence is NRIFVGGIDF…KKLNIGPAIR (78 aa). Residues 160-184 form the DAZ domain; sequence PSRSVCSSPVMVAQPIYQQPAYHYQ.

This sequence belongs to the RRM DAZ family. Interacts with DAZ1 and DAZL. As to expression, testis specific. Not expressed in early embryos, primordial germ cells and spermatogonial cells. First expressed in the cytoplasm of spermatocytes and then persists through meiosis.

The protein resides in the cytoplasm. Functionally, probable RNA-binding protein, which may be required during spermatogenesis. May act by binding to the 3'-UTR of mRNAs and regulating their translation. This is Protein boule-like (BOLL) from Homo sapiens (Human).